The sequence spans 178 residues: MDKRSYATVEKYAAPFVQIVLEKNQQRDVFRELSQIKGIFEETYLADFLSHIGVSQAEKSKVLRLFQTCDSVLVNNLIEVLIKNGREDFFYPILLDILKKIEKETNEFEVTIHSVEGLSEEQKARLIPVIEKKMNLKVRSIKENLDRSLIGGFAITANHKIIDTSIKRQLKAVKEKLK.

Belongs to the ATPase delta chain family. As to quaternary structure, F-type ATPases have 2 components, F(1) - the catalytic core - and F(0) - the membrane proton channel. F(1) has five subunits: alpha(3), beta(3), gamma(1), delta(1), epsilon(1). F(0) has three main subunits: a(1), b(2) and c(10-14). The alpha and beta chains form an alternating ring which encloses part of the gamma chain. F(1) is attached to F(0) by a central stalk formed by the gamma and epsilon chains, while a peripheral stalk is formed by the delta and b chains.

It localises to the cell membrane. Its function is as follows. F(1)F(0) ATP synthase produces ATP from ADP in the presence of a proton or sodium gradient. F-type ATPases consist of two structural domains, F(1) containing the extramembraneous catalytic core and F(0) containing the membrane proton channel, linked together by a central stalk and a peripheral stalk. During catalysis, ATP synthesis in the catalytic domain of F(1) is coupled via a rotary mechanism of the central stalk subunits to proton translocation. Functionally, this protein is part of the stalk that links CF(0) to CF(1). It either transmits conformational changes from CF(0) to CF(1) or is implicated in proton conduction. This Streptococcus gordonii (strain Challis / ATCC 35105 / BCRC 15272 / CH1 / DL1 / V288) protein is ATP synthase subunit delta.